Reading from the N-terminus, the 499-residue chain is Probable cytosol aminopeptidase (499 aa).

Mn(2+)-binding residues include K271 and D276. K283 is a catalytic residue. D294, D353, and E355 together coordinate Mn(2+). The active site involves R357.

This sequence belongs to the peptidase M17 family. Requires Mn(2+) as cofactor.

The protein localises to the cytoplasm. It catalyses the reaction Release of an N-terminal amino acid, Xaa-|-Yaa-, in which Xaa is preferably Leu, but may be other amino acids including Pro although not Arg or Lys, and Yaa may be Pro. Amino acid amides and methyl esters are also readily hydrolyzed, but rates on arylamides are exceedingly low.. It carries out the reaction Release of an N-terminal amino acid, preferentially leucine, but not glutamic or aspartic acids.. In terms of biological role, presumably involved in the processing and regular turnover of intracellular proteins. Catalyzes the removal of unsubstituted N-terminal amino acids from various peptides. In Bordetella parapertussis (strain 12822 / ATCC BAA-587 / NCTC 13253), this protein is Probable cytosol aminopeptidase.